The sequence spans 20 residues: Short cationic peptide-6a (20 aa).

Ser20 carries the serine amide modification.

In terms of tissue distribution, expressed by the venom gland.

The protein resides in the secreted. This chain is Short cationic peptide-6a, found in Cupiennius salei (American wandering spider).